The chain runs to 994 residues: Cation-chloride cotransporter 2 (994 aa).

The disordered stretch occupies residues 1-28 (MERGGFGGAGRHDEEAPAMRPAPQQRYR). At 1–139 (MERGGFGGAG…GHPKETETKL (139 aa)) the chain is on the cytoplasmic side. The chain crosses the membrane as a helical span at residues 140–160 (DTMMGVFVPCLQNILGIIYYI). Topologically, residues 161–174 (RFTWIVGMGGVWQS) are extracellular. Residues 175 to 195 (LVLVAFCGSCTFLTTISLSAI) form a helical membrane-spanning segment. Topologically, residues 196–221 (ATNGAMKGGGPYYLIGRALGPEVGVS) are cytoplasmic. Residues 222–242 (IGLCFFLGNAVAGAMYVLGAV) form a helical membrane-spanning segment. Residues 243–287 (ETFLDAVPSAEFFQESVTVVTNTFVNGTAAGNATTISTPNLHDLQ) lie on the Extracellular side of the membrane. Residues Asn-268 and Asn-274 are each glycosylated (N-linked (GlcNAc...) asparagine). The helical transmembrane segment at 288–308 (VYGIIVTILLCFIVFGGVKII) threads the bilayer. At 309–311 (NKV) the chain is on the cytoplasmic side. The helical transmembrane segment at 312–332 (APAFLIPVLFSILCIYIGVFI) threads the bilayer. Over 333 to 372 (APRPNASKWITGLSITTLKDNWSSDYQRTNNAGVPDPNGS) the chain is Extracellular. N-linked (GlcNAc...) asparagine glycans are attached at residues Asn-337, Asn-353, and Asn-370. Residues 373 to 393 (IYWDFNALLGLYFPAVTGIMA) form a helical membrane-spanning segment. The Cytoplasmic portion of the chain corresponds to 394–412 (GSNRSASLKDTQRSIPIGT). Residues 413–433 (LHATISTTMMYLLSVFLFGAL) form a helical membrane-spanning segment. The Extracellular portion of the chain corresponds to 434–448 (STREGLLTDRLLCAA). The chain crosses the membrane as a helical span at residues 449 to 469 (VAWPSPAVVYAGIILSTLGAA). At 470–505 (LQSLTGAPRLLAAIANDDILPVLNYFKAYEGSEPHV) the chain is on the cytoplasmic side. A helical membrane pass occupies residues 506 to 526 (ATLFTSFICISCVIIGNLDVI). Over 527-529 (TPT) the chain is Extracellular. Residues 530-552 (ITMFFLLCYAGVNLSCFLLDLLD) traverse the membrane as a helical segment. Residues 553-558 (APSWRP) are Cytoplasmic-facing. The helical transmembrane segment at 559 to 579 (RWKLHHWSLSLIGALLCIVIM) threads the bilayer. Residues 580-585 (FMISWT) are Extracellular-facing. Residues 586–606 (FTVVSLALASLIYYYVSLKGK) form a helical membrane-spanning segment. At 607–994 (AGDWGDGFKS…YRRDVVTLFT (388 aa)) the chain is on the cytoplasmic side.

This sequence belongs to the SLC12A transporter family.

It localises to the membrane. In terms of biological role, probable cation/chloride cotransporter. The chain is Cation-chloride cotransporter 2 (CCC2) from Oryza sativa subsp. japonica (Rice).